The primary structure comprises 383 residues: Putative glutamate--cysteine ligase 2-1 (383 aa).

It belongs to the glutamate--cysteine ligase type 2 family. YbdK subfamily.

It catalyses the reaction L-cysteine + L-glutamate + ATP = gamma-L-glutamyl-L-cysteine + ADP + phosphate + H(+). ATP-dependent carboxylate-amine ligase which exhibits weak glutamate--cysteine ligase activity. The chain is Putative glutamate--cysteine ligase 2-1 from Arthrobacter sp. (strain FB24).